Here is a 1040-residue protein sequence, read N- to C-terminus: FHF complex subunit HOOK-interacting protein 1A (1040 aa).

3 disordered regions span residues 555–613 (PQQL…PIDP), 653–746 (SEDM…AAHP), and 769–808 (LMEQ…EDEE). The span at 653–664 (SEDMKDSQEEAA) shows a compositional bias: basic and acidic residues. The segment covering 677-690 (VPINNGPLLSTQPE) has biased composition (polar residues). Composition is skewed to basic and acidic residues over residues 696-719 (EWNR…REPE) and 783-804 (TKEE…KKEL).

It belongs to the FHIP family. In terms of assembly, may be a component of the FTS/Hook/FHIP complex (FHF complex), composed of AKTIP/FTS, FHIP1B, and one or more members of the Hook family of proteins HOOK1, HOOK2, and HOOK3. May interact directly with AKTIP/FTS.

Probable component of the FTS/Hook/FHIP complex (FHF complex). FHF complex promotes the distribution of AP-4 complex to the perinuclear area of the cell. In Homo sapiens (Human), this protein is FHF complex subunit HOOK-interacting protein 1A.